A 749-amino-acid polypeptide reads, in one-letter code: Protein SEY1 homolog 2 (749 aa).

Over 1-671 the chain is Cytoplasmic; the sequence is MIKNYGDRYH…QKHKQDFLQN (671 aa). Residues 40 to 265 form the GB1/RHD3-type G domain; that stretch reads GKNYNIVSII…YEKNVRWSDM (226 aa). Position 50 to 57 (50 to 57) interacts with GTP; that stretch reads GSQSTGKS. Residues 445 to 465 adopt a coiled-coil conformation; the sequence is NQLKAFVEAQLATFKQQLDNI. Residues 672 to 692 traverse the membrane as a helical segment; it reads IPKPFWFLLLFFMYDDVLRWM. Residues 693 to 695 lie on the Lumenal side of the membrane; that stretch reads GNP. Residues 696–716 form a helical membrane-spanning segment; that stretch reads LFLYPILIILCFVGFCIAIGL. Residues 717 to 749 are Cytoplasmic-facing; sequence HSLPKLAFQWVFRTLNQAVIPIIFGGISKLKGS.

It belongs to the TRAFAC class dynamin-like GTPase superfamily. GB1/RHD3 GTPase family. RHD3 subfamily.

It is found in the endoplasmic reticulum membrane. Its function is as follows. Probable GTP-binding protein that may be involved in cell development. In Paramecium tetraurelia, this protein is Protein SEY1 homolog 2.